Reading from the N-terminus, the 185-residue chain is Transcriptional repressor NrdR (185 aa).

The disordered stretch occupies residues 1-24 (MRCPFCGGPDTQVKDSRPSEDSSA). A zinc finger spans residues 3 to 34 (CPFCGGPDTQVKDSRPSEDSSAIRRRRVCPDC). Positions 12–24 (QVKDSRPSEDSSA) are enriched in basic and acidic residues. The region spanning 49–139 (LVVLKRSGKR…VYKNFREAQD (91 aa)) is the ATP-cone domain. Residues 148–185 (GERLDGEGDLPEQGDAVPAPPDEAVAAPRRGRPARKRA) are disordered. Over residues 176–185 (RRGRPARKRA) the composition is skewed to basic residues.

Belongs to the NrdR family. Requires Zn(2+) as cofactor.

Functionally, negatively regulates transcription of bacterial ribonucleotide reductase nrd genes and operons by binding to NrdR-boxes. In Methylorubrum extorquens (strain CM4 / NCIMB 13688) (Methylobacterium extorquens), this protein is Transcriptional repressor NrdR.